Reading from the N-terminus, the 1363-residue chain is Homeobox protein 13 (1363 aa).

The stretch at 15 to 73 (FVMEQIQQQQQQQQQQQQQQQQQQQQQQQQQQQQLQQQQQQQQQQQQQQQQQQQQQQQN) forms a coiled coil. 9 disordered regions span residues 66–96 (QQQQ…STVP), 120–177 (SQHA…INGS), 308–437 (INGT…YHGG), 621–731 (LNSP…QHQQ), 765–818 (HHHH…PQHS), 857–911 (SINS…SNSI), 1001–1137 (QNYN…TLIN), 1166–1202 (NFIN…KRMR), and 1270–1341 (ISFG…TLIS). Over residues 73–96 (NPKMNNQPNETRLPSPPLLNSTVP) the composition is skewed to polar residues. The segment covering 132–147 (SLNSSNNNNNNNFNNS) has biased composition (low complexity). The segment covering 148-158 (RPTFSSCSGNS) has biased composition (polar residues). Composition is skewed to low complexity over residues 159–177 (NNTT…INGS) and 315–326 (SNHSNNNNNNNN). Basic residues predominate over residues 327–339 (NHHHHHHHHHQKR). The segment covering 348–378 (TNHLTPLPLLHKHTNNNNNINNNNNHNHNNI) has biased composition (low complexity). Residues 379 to 393 (LGSPNQLNRSQDFTS) are compositionally biased toward polar residues. 5 stretches are compositionally biased toward low complexity: residues 394–408 (KNNN…NNKI), 415–426 (NKGSPNQNSSEN), 641–693 (NNNS…NNNI), 709–731 (HHQQ…QHQQ), and 770–793 (QQQQ…SNHN). Residues 738-789 (QQQLQIQYQQQQTHNNNLNQTQQLYYNHHHHQQQQQQQQQQQQHNNNNNNNN) adopt a coiled-coil conformation. 2 stretches are compositionally biased toward polar residues: residues 794 to 818 (SVLT…PQHS) and 857 to 883 (SINS…QKNR). Composition is skewed to low complexity over residues 889 to 911 (ILNS…SNSI), 1001 to 1031 (QNYN…NNNF), and 1045 to 1063 (NINN…NNNN). The segment covering 1064 to 1078 (KNDKNESEFESKEKL) has biased composition (basic and acidic residues). The segment covering 1081-1095 (PFGSSIPNIVNNEQL) has biased composition (polar residues). Composition is skewed to low complexity over residues 1096 to 1116 (SPYS…PQWS), 1123 to 1137 (TSSS…TLIN), and 1166 to 1177 (NFINNNSNNNNN). Residues 1179–1195 (EIDDDDEDGIDGIEGED) show a composition bias toward acidic residues. The segment at residues 1198 to 1261 (KKRMRKTTRP…NRRTKDKLKN (64 aa)) is a DNA-binding region (homeobox). Low complexity predominate over residues 1275 to 1294 (SSTSSTQTSTNSPSSQLSPL). Positions 1297–1316 (NMNNNDQQSISTPSLILSQI) are enriched in polar residues. Over residues 1317–1334 (NNNQNNNQNNNNNNNTNN) the composition is skewed to low complexity.

Its subcellular location is the nucleus. Functionally, putative transcription factor. The sequence is that of Homeobox protein 13 (hbx13) from Dictyostelium discoideum (Social amoeba).